The primary structure comprises 207 residues: Phosphoserine phosphatase (207 aa).

D8 functions as the Nucleophile in the catalytic mechanism. The Mg(2+) site is built by D8 and D10. D10 acts as the Proton donor in catalysis. Substrate-binding positions include E17, R53, S96–G97, and K141. Mg(2+) is bound at residue D164. N167 serves as a coordination point for substrate.

The protein belongs to the HAD-like hydrolase superfamily. SerB family. Mg(2+) serves as cofactor.

The catalysed reaction is O-phospho-L-serine + H2O = L-serine + phosphate. It carries out the reaction O-phospho-D-serine + H2O = D-serine + phosphate. It functions in the pathway amino-acid biosynthesis; L-serine biosynthesis; L-serine from 3-phospho-D-glycerate: step 3/3. This Campylobacter jejuni subsp. doylei (strain ATCC BAA-1458 / RM4099 / 269.97) protein is Phosphoserine phosphatase.